Reading from the N-terminus, the 98-residue chain is Large ribosomal subunit protein uL23c (98 aa).

This sequence belongs to the universal ribosomal protein uL23 family. Part of the 50S ribosomal subunit.

The protein resides in the plastid. It localises to the chloroplast. In terms of biological role, binds to 23S rRNA. The sequence is that of Large ribosomal subunit protein uL23c (rpl23) from Thalassiosira pseudonana (Marine diatom).